We begin with the raw amino-acid sequence, 308 residues long: Maspardin (308 aa).

The AB hydrolase-1 domain occupies 87–159 (FCDGFRKLLD…NSFWLMPAFM (73 aa)). Ser304 carries the post-translational modification Phosphoserine.

The protein belongs to the AB hydrolase superfamily. In terms of assembly, interacts with CD4. Interacts with ALDH16A1. As to expression, expressed in cell lines FT.1 and in a L cell fibroblast derivative (at protein level).

Its subcellular location is the cytoplasm. May play a role as a negative regulatory factor in CD4-dependent T-cell activation. This Mus musculus (Mouse) protein is Maspardin (Spg21).